A 337-amino-acid chain; its full sequence is Arylacetonitrilase (337 aa).

The region spanning 7-278 (VRVAVTQHEP…EGFVYADLDL (272 aa)) is the CN hydrolase domain. Glu47 serves as the catalytic Proton acceptor. Lys127 is a catalytic residue. The active-site Nucleophile is the Cys162. A disordered region spans residues 311–337 (QHRPEGQADNAAYGLDVPSGLVEEEGA).

The protein belongs to the carbon-nitrogen hydrolase superfamily. Nitrilase family.

It catalyses the reaction a nitrile + 2 H2O = a carboxylate + NH4(+). The catalysed reaction is 4-chlorophenylacetonitrile + 2 H2O = 4-chlorophenylacetate + NH4(+). Functionally, nitrilase that hydrolyzes preferentially phenylacetonitrile, but also (R,S)-mandelonitrile, and 2-phenylpropionitrile. This Aspergillus niger (strain ATCC MYA-4892 / CBS 513.88 / FGSC A1513) protein is Arylacetonitrilase.